The following is a 770-amino-acid chain: Pyrophosphate-energized vacuolar membrane proton pump 1 (770 aa).

Topologically, residues 1–9 (MVAPALLPE) are intravacuolar. The helical transmembrane segment at 10 to 36 (LWTEILVPICAVIGIAFSLFQWYVVSR) threads the bilayer. Residues 37 to 88 (VKLTSDLGASSSGGANNGKNGYGDYLIEEEEGVNDQSVVAKCAEIQTAISEG) lie on the Cytoplasmic side of the membrane. Residues 89–118 (ATSFLFTEYKYVGVFMIFFAAVIFVFLGSV) traverse the membrane as a helical segment. The Intravacuolar portion of the chain corresponds to 119–139 (EGFSTDNKPCTYDTTRTCKPA). The cysteines at positions 128 and 136 are disulfide-linked. The helical transmembrane segment at 140 to 167 (LATAAFSTIAFVLGAVTSVLSGFLGMKI) threads the bilayer. Residues 168-190 (ATYANARTTLEARKGVGKAFIVA) lie on the Cytoplasmic side of the membrane. The helical transmembrane segment at 191-220 (FRSGAVMGFLLAASGLLVLYITINVFKIYY) threads the bilayer. The Intravacuolar portion of the chain corresponds to 221–223 (GDD). Residues 224-252 (WEGLFEAITGYGLGGSSMALFGRVGGGIY) traverse the membrane as a helical segment. Residues 253-290 (TKAADVGADLVGKIERNIPEDDPRNPAVIADNVGDNVG) lie on the Cytoplasmic side of the membrane. Lys254 lines the substrate pocket. The Mg(2+) site is built by Asp257, Asp261, and Asp287. The chain crosses the membrane as a helical span at residues 291-316 (DIAGMGSDLFGSYAEASCAALVVASI). The Intravacuolar portion of the chain corresponds to 317 to 324 (SSFGINHD). A helical transmembrane segment spans residues 325–350 (FTAMCYPLLISSMGILVCLITTLFAT). The Cytoplasmic portion of the chain corresponds to 351–358 (DFFEIKLV). A helical membrane pass occupies residues 359 to 386 (KEIEPALKNQLIISTVIMTVGIAIVSWV). Over 387–405 (GLPTSFTIFNFGTQKVVKN) the chain is Intravacuolar. A helical membrane pass occupies residues 406-429 (WQLFLCVCVGLWAGLIIGFVTEYY). The Cytoplasmic segment spans residues 430 to 451 (TSNAYSPVQDVADSCRTGAATN). A helical membrane pass occupies residues 452-476 (VIFGLALGYKSVIIPIFAIAISIFV). Residues 477–482 (SFSFAA) are Intravacuolar-facing. A helical transmembrane segment spans residues 483-509 (MYGVAVAALGMLSTIATGLAIDAYGPI). Residues 510-538 (SDNAGGIAEMAGMSHRIRERTDALDAAGN) lie on the Cytoplasmic side of the membrane. Residues Asp511 and Asn538 each contribute to the Mg(2+) site. Residues 539-567 (TTAAIGKGFAIGSAALVSLALFGAFVSRA) traverse the membrane as a helical segment. The Intravacuolar portion of the chain corresponds to 568–577 (GIHTVDVLTP). Residues 578–606 (KVIIGLLVGAMLPYWFSAMTMKSVGSAAL) form a helical membrane-spanning segment. Topologically, residues 607–635 (KMVEEVRRQFNTIPGLMEGTAKPDYATCV) are cytoplasmic. Residues 636 to 664 (KISTDASIKEMIPPGCLVMLTPLIVGFFF) traverse the membrane as a helical segment. Residue Gly665 is a topological domain, intravacuolar. The helical transmembrane segment at 666 to 693 (VETLSGVLAGSLVSGVQIAISASNTGGA) threads the bilayer. The Cytoplasmic segment spans residues 694 to 736 (WDNAKKYIEAGVSEHAKSLGPKGSEPHKAAVIGDTIGDPLKDT). Mg(2+) is bound by residues Asp695 and Asp731. Position 734 (Lys734) interacts with substrate. A helical membrane pass occupies residues 737–762 (SGPSLNILIKLMAVESLVFAPFFATH). Residues 763-770 (GGILFKYF) are Intravacuolar-facing.

This sequence belongs to the H(+)-translocating pyrophosphatase (TC 3.A.10) family. K(+)-stimulated subfamily. Monomer. As to expression, ubiquitous (at protein level). Mostly expressed in vascular tissues, meristems and root pericycle.

It is found in the vacuole membrane. Its subcellular location is the endosome membrane. The protein localises to the cell membrane. The enzyme catalyses diphosphate + H2O + H(+)(in) = 2 phosphate + 2 H(+)(out). Activated by K(+) and Mg(2+). Inhibited by Ca(2+), N,N'-dicyclohexylcarbodiimide (DCCD), N-ethylmaleimide (NEM) and aminomethylenediphosphonate (AMDP), and, to a lower extent, by fluoride (KF). Its function is as follows. Contributes to the transtonoplast (from cytosol to vacuole lumen) H(+)-electrochemical potential difference. It establishes a proton gradient of similar and often greater magnitude than the H(+)-ATPase on the same membrane. In addition, facilitates auxin transport by modulating apoplastic pH and regulates auxin-mediated developmental processes. Confers tolerance to NaCl and to drought by increasing ion retention. The sequence is that of Pyrophosphate-energized vacuolar membrane proton pump 1 (AVP1) from Arabidopsis thaliana (Mouse-ear cress).